A 314-amino-acid chain; its full sequence is MTADYGHVTVFLRQAVENLAVKTNGIYVDATLGGGGHTDLLLKKALHGHVYSFDQDENAIDFNKKRFSKEISEGRLSLIHSNFQNLIKELNLLKVFAIDGIVFDLGVSSPQFDDEKRGFSYRSDARLDMRMDQSQSLDAYQIVNTWEYKDLASIINRYGEEKFASSIARKIIKRREVQPIITTEELVETIKEALPDKILHKKGHPAKKTFQAIRIAVNDELNVLQEALKQASQLLNSGGRISVITFQSLEDRIVKHFFNQLATKNQLPSKLPVPDKFIQEEFKLLTKHPLIPSVEEIEENHRAHSAKLRVLEKN.

S-adenosyl-L-methionine contacts are provided by residues 35-37 (GGH), Asp54, Phe83, Asp104, and Gln111.

It belongs to the methyltransferase superfamily. RsmH family.

It is found in the cytoplasm. The enzyme catalyses cytidine(1402) in 16S rRNA + S-adenosyl-L-methionine = N(4)-methylcytidine(1402) in 16S rRNA + S-adenosyl-L-homocysteine + H(+). Its function is as follows. Specifically methylates the N4 position of cytidine in position 1402 (C1402) of 16S rRNA. The polypeptide is Ribosomal RNA small subunit methyltransferase H (Oenococcus oeni (strain ATCC BAA-331 / PSU-1)).